We begin with the raw amino-acid sequence, 265 residues long: Isoprenyl transferase (265 aa).

Residue Asp35 is part of the active site. Residue Asp35 coordinates Mg(2+). Residues 36–39, Trp40, Arg48, His52, and 80–82 contribute to the substrate site; these read GNGR and SIE. The active-site Proton acceptor is Asn83. Substrate-binding positions include Trp84, Arg86, Arg203, and 209–211; that span reads RIS. Glu222 contributes to the Mg(2+) binding site.

It belongs to the UPP synthase family. In terms of assembly, homodimer. Mg(2+) is required as a cofactor.

Functionally, catalyzes the condensation of isopentenyl diphosphate (IPP) with allylic pyrophosphates generating different type of terpenoids. The sequence is that of Isoprenyl transferase from Chlorobaculum tepidum (strain ATCC 49652 / DSM 12025 / NBRC 103806 / TLS) (Chlorobium tepidum).